We begin with the raw amino-acid sequence, 337 residues long: Glyceraldehyde-3-phosphate dehydrogenase (337 aa).

Residues 13 to 14, Asp35, and Lys80 each bind NAD(+); that span reads RI. D-glyceraldehyde 3-phosphate-binding positions include 151–153, Thr182, 211–212, and Arg234; these read SCT and TG. Cys152 (nucleophile) is an active-site residue. Position 316 (Asn316) interacts with NAD(+).

This sequence belongs to the glyceraldehyde-3-phosphate dehydrogenase family. As to quaternary structure, homotetramer.

Its subcellular location is the cytoplasm. The enzyme catalyses D-glyceraldehyde 3-phosphate + phosphate + NAD(+) = (2R)-3-phospho-glyceroyl phosphate + NADH + H(+). The protein operates within carbohydrate degradation; glycolysis; pyruvate from D-glyceraldehyde 3-phosphate: step 1/5. This is Glyceraldehyde-3-phosphate dehydrogenase (GAPD) from Mycosarcoma maydis (Corn smut fungus).